Here is a 585-residue protein sequence, read N- to C-terminus: Pyruvate kinase (585 aa).

Substrate is bound at residue Arg-32. K(+) is bound by residues Asn-34, Ser-36, Asp-66, and Thr-67. An ATP-binding site is contributed by 34 to 37; the sequence is NFSH. Residues Arg-73 and Lys-156 each contribute to the ATP site. Position 221 (Glu-221) interacts with Mg(2+). 3 residues coordinate substrate: Gly-244, Asp-245, and Thr-277. Asp-245 serves as a coordination point for Mg(2+).

This sequence belongs to the pyruvate kinase family. The protein in the C-terminal section; belongs to the PEP-utilizing enzyme family. Mg(2+) serves as cofactor. It depends on K(+) as a cofactor.

The catalysed reaction is pyruvate + ATP = phosphoenolpyruvate + ADP + H(+). It participates in carbohydrate degradation; glycolysis; pyruvate from D-glyceraldehyde 3-phosphate: step 5/5. This chain is Pyruvate kinase (pyk), found in Staphylococcus aureus (strain bovine RF122 / ET3-1).